Consider the following 590-residue polypeptide: Myo-inositol transporter 3 (590 aa).

Positions 1 to 26 are enriched in basic and acidic residues; the sequence is MRTTHIEDRDNNSLENKHTDHIEGVE. The tract at residues 1–40 is disordered; it reads MRTTHIEDRDNNSLENKHTDHIEGVENGKGTQEPPSPSGF. Residues 1 to 57 are Cytoplasmic-facing; that stretch reads MRTTHIEDRDNNSLENKHTDHIEGVENGKGTQEPPSPSGFGGHLIDENLVHVEGEDK. Residues 58 to 78 traverse the membrane as a helical segment; the sequence is VTWYLCFLISASAIAGFLFGY. The Extracellular segment spans residues 79-105; it reads DTGVVGVALPLVGTDLGGNELNSSQQE. Asn100 is a glycosylation site (N-linked (GlcNAc...) asparagine). A helical membrane pass occupies residues 106 to 126; sequence IITAGTTIGAIFGSAILGGWG. Residues 127 to 132 are Cytoplasmic-facing; sequence DHLGRK. A helical membrane pass occupies residues 133–153; that stretch reads MAILISDVFFTVGAVIIASSY. The Extracellular portion of the chain corresponds to 154–157; it reads SVPQ. A helical membrane pass occupies residues 158–178; sequence IIVGRIVLGVGVGGAAVIAPL. At 179–192 the chain is on the cytoplasmic side; the sequence is FITETAPTAVRGRC. A helical membrane pass occupies residues 193–213; it reads IGVNAFFIPFGQLVADSIGAG. Over 214–222 the chain is Extracellular; the sequence is VQNMHGGWR. Residues 223-243 form a helical membrane-spanning segment; that stretch reads LLFALGAVPSLIQLLLFHYLP. The Cytoplasmic segment spans residues 244 to 325; sequence ESPRILIVKG…AVSVLQAAGQ (82 aa). Residues 326–346 form a helical membrane-spanning segment; the sequence is LCGFNTLLYYAGTLFGLLGLS. Over 347–349 the chain is Extracellular; that stretch reads NPA. A helical membrane pass occupies residues 350–370; the sequence is LGGLIPAGTNAVFVLIGMSTV. Topologically, residues 371–376 are cytoplasmic; the sequence is DKIGRR. The helical transmembrane segment at 377–397 threads the bilayer; that stretch reads GLLLVGVPVLLLGLVWNIIGF. At 398–420 the chain is on the extracellular side; that stretch reads YYMCKPTGGFLDTSYSYDTTNVG. The helical transmembrane segment at 421–441 threads the bilayer; that stretch reads IVIGGIVFYVAGFGLTYSHLV. Topologically, residues 442-455 are cytoplasmic; that stretch reads WYQAEYLALEVRSM. The chain crosses the membrane as a helical span at residues 456–476; that stretch reads GSGVATTVCWIANLVVSVSYL. Topologically, residues 477–485 are extracellular; the sequence is SELETMTPS. The helical transmembrane segment at 486-506 threads the bilayer; the sequence is GTYGFYLGLSVIAFVFVVFCF. The Cytoplasmic portion of the chain corresponds to 507–590; sequence PETKQLSIDE…GGKRKPQVLV (84 aa).

This sequence belongs to the major facilitator superfamily. Sugar transporter (TC 2.A.1.1) family.

Its subcellular location is the cell membrane. The enzyme catalyses myo-inositol(out) + H(+)(out) = myo-inositol(in) + H(+)(in). Functionally, transporter for myo-inositol. The chain is Myo-inositol transporter 3 from Cryptococcus neoformans var. grubii serotype A (strain H99 / ATCC 208821 / CBS 10515 / FGSC 9487) (Filobasidiella neoformans var. grubii).